Reading from the N-terminus, the 538-residue chain is MNNPLLSISNPVKFFKPPIPYRISLNTTINKKQKHQSKTLVVKSNKRSTTSLTSSVSLVRRRNNNGDGETTLVKKVGRDEKGQTVLLCALGYWVQGLRCFSWLALNFHMAHCLNLKPSTLQLVQYTASLPMVAKPLYGVLSDVLYIGGARRVPYISVGVLLQGLAWGSLAIFPGAREVLPSLMAFILLSNLGASITEVSQDALVAEYGLRYQINGLQSYALMASAVGGILGNLLGGYCLLKTPPRILFLAFTALLSLQLIVSLSSKEESVNLPRIGEVTPEISSVLGIVKKQFLDLKGIVQVDEISQPLIWIVSSIALVPLLSGSVFCYQTQVLNLDPSVIGMSKVIGQLMLLCLTVVYDRYWKKLPMRALIHIVQLLYAFSLLFDYILVKQINLAFGISNTAFVLCFSSVAEILAQFKILPFSVLLANMCPGGCEGSITSFLASTLCLSSVVSGFTGVGMANMIGITSKNYSNLPAGILIQSLAALVPLWFIHYVPMLEPGFEREGKRAMSKKSRRNRRVGRVIGQESFAYRRERET.

Residues 1-57 (MNNPLLSISNPVKFFKPPIPYRISLNTTINKKQKHQSKTLVVKSNKRSTTSLTSSVS) constitute a chloroplast transit peptide. Transmembrane regions (helical) follow at residues 85–105 (VLLC…WLAL), 129–149 (LPMV…IGGA), 152–172 (VPYI…LAIF), 178–198 (VLPS…ITEV), 220–240 (ALMA…YCLL), 246–266 (ILFL…LSSK), 309–329 (LIWI…VFCY), 339–359 (SVIG…TVVY), 370–390 (ALIH…YILV), 395–415 (LAFG…AEIL), 447–467 (LCLS…MIGI), and 479–499 (ILIQ…VPML).

The protein belongs to the major facilitator superfamily. Folate-biopterin transporter (TC 2.A.71) family.

Its subcellular location is the plastid. It localises to the chloroplast membrane. Could mediate folate transport. This is Probable folate-biopterin transporter 9, chloroplastic from Arabidopsis thaliana (Mouse-ear cress).